Here is a 589-residue protein sequence, read N- to C-terminus: Arginine--tRNA ligase (589 aa).

A 'HIGH' region motif is present at residues 131-141 (ANPTGPLHVGH).

This sequence belongs to the class-I aminoacyl-tRNA synthetase family. Monomer.

It is found in the cytoplasm. The catalysed reaction is tRNA(Arg) + L-arginine + ATP = L-arginyl-tRNA(Arg) + AMP + diphosphate. The chain is Arginine--tRNA ligase from Legionella pneumophila subsp. pneumophila (strain Philadelphia 1 / ATCC 33152 / DSM 7513).